Here is a 199-residue protein sequence, read N- to C-terminus: Putative pseudouridine methyltransferase (199 aa).

2 residues coordinate S-adenosyl-L-methionine: M132 and C186.

The protein belongs to the methyltransferase superfamily. TrmY family.

It localises to the cytoplasm. This Vibrio atlanticus (strain LGP32) (Vibrio splendidus (strain Mel32)) protein is Putative pseudouridine methyltransferase.